Consider the following 297-residue polypeptide: tRNA-cytidine(32) 2-sulfurtransferase (297 aa).

A PP-loop motif motif is present at residues serine 45–serine 50. Residues cysteine 120, cysteine 123, and cysteine 211 each coordinate [4Fe-4S] cluster.

It belongs to the TtcA family. Homodimer. It depends on Mg(2+) as a cofactor. [4Fe-4S] cluster serves as cofactor.

The protein resides in the cytoplasm. The catalysed reaction is cytidine(32) in tRNA + S-sulfanyl-L-cysteinyl-[cysteine desulfurase] + AH2 + ATP = 2-thiocytidine(32) in tRNA + L-cysteinyl-[cysteine desulfurase] + A + AMP + diphosphate + H(+). Its pathway is tRNA modification. Its function is as follows. Catalyzes the ATP-dependent 2-thiolation of cytidine in position 32 of tRNA, to form 2-thiocytidine (s(2)C32). The sulfur atoms are provided by the cysteine/cysteine desulfurase (IscS) system. The protein is tRNA-cytidine(32) 2-sulfurtransferase of Vibrio parahaemolyticus serotype O3:K6 (strain RIMD 2210633).